The primary structure comprises 416 residues: ABSCISIC ACID-INSENSITIVE 5-like protein 5 (416 aa).

A disordered region spans residues 1-23 (MDGSMNLGNEPPGDGGGGGGLTR). Residues 13–22 (GDGGGGGGLT) show a composition bias toward gly residues. Phosphoserine is present on residues Ser26, Ser45, and Ser86. Thr135 bears the Phosphothreonine mark. Residues 300–326 (SEGIGKSNGDSSSLSPSPYMFNGGVRG) are disordered. The 64-residue stretch at 336–399 (VERRQRRMIK…KNQETEMRNL (64 aa)) folds into the bZIP domain. The tract at residues 338 to 357 (RRQRRMIKNRESAARSRARK) is basic motif. The leucine-zipper stretch occupies residues 364 to 385 (LEAEVAKLKEENDELQRKQARI). The segment at 388-416 (MQKNQETEMRNLLQGGPKKKLRRTESGPW) is disordered.

It belongs to the bZIP family. ABI5 subfamily. In terms of assembly, DNA-binding heterodimer. Interacts with ARIA. Post-translationally, the activation by phosphorylation is induced by abscisic acid (ABA). Phosphorylated by SRK2C, SRK2D, SRK2E, SRK2F and SRK2I in vitro. In terms of tissue distribution, expressed in roots, leaves, flowers and siliques but not in seeds.

It is found in the nucleus. In terms of biological role, involved in ABA and stress responses and acts as a positive component of glucose signal transduction. Functions as a transcriptional activator in the ABA-inducible expression of rd29B. Binds specifically to the ABA-responsive element (ABRE) of the rd29B gene promoter. In Arabidopsis thaliana (Mouse-ear cress), this protein is ABSCISIC ACID-INSENSITIVE 5-like protein 5 (ABF2).